The sequence spans 340 residues: uncharacterized protein (340 aa).

This is an uncharacterized protein from Methanocaldococcus jannaschii (strain ATCC 43067 / DSM 2661 / JAL-1 / JCM 10045 / NBRC 100440) (Methanococcus jannaschii).